Here is a 320-residue protein sequence, read N- to C-terminus: uncharacterized protein (320 aa).

In terms of assembly, interacts with VP1054, VP39 and VP80.

It localises to the virion. It is found in the host nucleus. The protein resides in the host cytoplasm. In terms of biological role, plays a role in nucleocapsid assembly and is essential for viral replication. Distributed over the cylindrical capsid sheath of nucleocapsid. This is an uncharacterized protein from Lepidoptera (butterflies and moths).